Consider the following 377-residue polypeptide: Flagellin C (377 aa).

2 coiled-coil regions span residues 103–129 (SNSKADRVAIQEEITALNDELNRIAET) and 301–340 (VDSHRAQLGAFQNRFNHAINNLDNINENVNASKSRIKDTD).

The protein belongs to the bacterial flagellin family. In terms of assembly, heteromer of multiple flagellin subunits including FlaA, FlaB, FlaC, FlaD and possibly FlaE.

Its subcellular location is the secreted. The protein localises to the bacterial flagellum. Flagellin is the subunit protein which polymerizes to form the filaments of bacterial flagella. FlaC is not essential for flagellar synthesis and motility. This chain is Flagellin C (flaC), found in Vibrio anguillarum (Listonella anguillarum).